Reading from the N-terminus, the 507-residue chain is MGCWGRNRGRLLCMLALTFMFMVLEVVVSRVTSSLAMLSDSFHMLSDVLALVVALVAERFARRTHATQKNTFGWIRAEVMGALVNAIFLTGLCFAILLEAIERFIEPHEMQQPLVVLGVGVAGLLVNVLGLCLFHHHSGFSQDSGHGHSHGGHGHGHGLPKGPRVKSTRPGSSDINVAPGEQGPDQEETNTLVANTSNSNGLKLDPADPENPRSGDTVEVQVNGNLVREPDHMELEEDRAGQLNMRGVFLHVLGDALGSVIVVVNALVFYFSWKGCSEGDFCVNPCFPDPCKAFVEIINSTHASVYEAGPCWVLYLDPTLCVVMVCILLYTTYPLLKESALILLQTVPKQIDIRNLIKELRNVEGVEEVHELHVWQLAGSRIIATAHIKCEDPTSYMEVAKTIKDVFHNHGIHATTIQPEFASVGSKSSVVPCELACRTQCALKQCCGTLPQAPSGKDAEKTPAVSISCLELSNNLEKKPRRTKAENIPAVVIEIKNMPNKQPESSL.

The Cytoplasmic segment spans residues 1 to 10 (MGCWGRNRGR). A helical transmembrane segment spans residues 11-31 (LLCMLALTFMFMVLEVVVSRV). Topologically, residues 32 to 35 (TSSL) are extracellular. A helical membrane pass occupies residues 36 to 56 (AMLSDSFHMLSDVLALVVALV). Residues His-43 and Asp-47 each contribute to the Zn(2+) site. Residues 57–78 (AERFARRTHATQKNTFGWIRAE) are Cytoplasmic-facing. Residues 79–99 (VMGALVNAIFLTGLCFAILLE) form a helical membrane-spanning segment. The Extracellular segment spans residues 100 to 113 (AIERFIEPHEMQQP). The chain crosses the membrane as a helical span at residues 114–134 (LVVLGVGVAGLLVNVLGLCLF). At 135–248 (HHHSGFSQDS…RAGQLNMRGV (114 aa)) the chain is on the cytoplasmic side. The disordered stretch occupies residues 142 to 217 (QDSGHGHSHG…DPENPRSGDT (76 aa)). Residues 146-158 (HGHSHGGHGHGHG) are 6 X 2 AA approximate repeats of H-G. Residues 147 to 167 (GHSHGGHGHGHGLPKGPRVKS) are compositionally biased toward basic residues. Positions 189–201 (TNTLVANTSNSNG) are enriched in polar residues. A helical transmembrane segment spans residues 249–269 (FLHVLGDALGSVIVVVNALVF). The Zn(2+) site is built by His-251 and Asp-255. The Extracellular portion of the chain corresponds to 270 to 308 (YFSWKGCSEGDFCVNPCFPDPCKAFVEIINSTHASVYEA). N-linked (GlcNAc...) asparagine glycosylation occurs at Asn-299. Residues 309-329 (GPCWVLYLDPTLCVVMVCILL) traverse the membrane as a helical segment. Topologically, residues 330–507 (YTTYPLLKES…MPNKQPESSL (178 aa)) are cytoplasmic. Residue Ser-506 is modified to Phosphoserine.

It belongs to the cation diffusion facilitator (CDF) transporter (TC 2.A.4) family. SLC30A subfamily. Homodimer. Interacts with TMEM163. Interacts and forms a complex with TMC6 and TMC8; the interaction regulates zinc transport into the ER. In terms of assembly, (Microbial infection) Interacts with human papillomavirus 16/HPV16 protein E5; the interaction alleviates SLC30A1-mediated transcription factors inhibition. Post-translationally, N-glycosylated at Asn-299. N-glycosylation promotes endocytosis and degradation through the proteasomal or lysosomal pathways.

The protein resides in the cell membrane. It is found in the basolateral cell membrane. It localises to the cytoplasmic vesicle membrane. The protein localises to the cytoplasm. Its subcellular location is the endoplasmic reticulum membrane. The protein resides in the golgi apparatus membrane. It is found in the nucleus membrane. It catalyses the reaction Zn(2+)(in) + 2 H(+)(out) = Zn(2+)(out) + 2 H(+)(in). In terms of biological role, zinc ion:proton antiporter that could function at the plasma membrane mediating zinc efflux from cells against its electrochemical gradient protecting them from intracellular zinc accumulation and toxicity. Alternatively, could prevent the transport to the plasma membrane of CACNB2, the L-type calcium channels regulatory subunit, through a yet to be defined mechanism. By modulating the expression of these channels at the plasma membrane, could prevent calcium and zinc influx into cells. By the same mechanism, could also prevent L-type calcium channels-mediated heavy metal influx into cells. In some cells, could also function as a zinc ion:proton antiporter mediating zinc entry into the lumen of cytoplasmic vesicles. In macrophages, can increase zinc ions concentration into the lumen of cytoplasmic vesicles containing engulfed bacteria and could help inactivate them. Forms a complex with TMC6/EVER1 and TMC8/EVER2 at the ER membrane of keratynocytes which facilitates zinc uptake into the ER. Down-regulates the activity of transcription factors induced by zinc and cytokines. The chain is Proton-coupled zinc antiporter SLC30A1 from Homo sapiens (Human).